The chain runs to 233 residues: Germin-like protein 3-7 (233 aa).

The first 35 residues, 1–35 (MSSSSSMECTGNMSAAPLLVLTVAVLAVLASTCAA), serve as a signal peptide directing secretion. The cysteines at positions 44 and 63 are disulfide-linked. In terms of domain architecture, Cupin type-1 spans 77–225 (AGLAAAGSTD…SFQVDAEIIK (149 aa)). Residues histidine 125, histidine 127, glutamate 132, and histidine 171 each coordinate Mn(2+). Asparagine 178 carries N-linked (GlcNAc...) asparagine glycosylation.

This sequence belongs to the germin family. As to quaternary structure, oligomer (believed to be a pentamer but probably hexamer).

The protein localises to the secreted. It is found in the extracellular space. Its subcellular location is the apoplast. Its function is as follows. May play a role in plant defense. Probably has no oxalate oxidase activity even if the active site is conserved. This chain is Germin-like protein 3-7 (GER7), found in Oryza sativa subsp. japonica (Rice).